We begin with the raw amino-acid sequence, 312 residues long: MSGENVTKVSTFILVGLPTAPGLQYLLFLLFLLTYLFVLVENLAIILIVWSSTSLHRPMYYFLSSMSFLEIWYVSDITPKMLEGFLLQQKRISFVGCMTQLYFFSSLVCTECVLLASMAYDRYVAICHPLRYHVLVTPGLCLQLVGFSFVSGFTISMIKVCFISSVTFCGSNVLNHFFCDISPILKLACTDFSTAELVDFILAFIILVFPLLATILSYWHITLAVLRIPSATGCWRAFSTCASHLTVVTVFYTALLFMYVRPQAIDSQSSNKLISAVYTVVTPIINPLIYCLRNKEFKDALKKALGLGQTSH.

Topologically, residues 1–25 (MSGENVTKVSTFILVGLPTAPGLQY) are extracellular. An N-linked (GlcNAc...) asparagine glycan is attached at asparagine 5. The helical transmembrane segment at 26–46 (LLFLLFLLTYLFVLVENLAII) threads the bilayer. Residues 47 to 54 (LIVWSSTS) are Cytoplasmic-facing. Residues 55 to 75 (LHRPMYYFLSSMSFLEIWYVS) traverse the membrane as a helical segment. Residues 76-99 (DITPKMLEGFLLQQKRISFVGCMT) are Extracellular-facing. The cysteines at positions 97 and 189 are disulfide-linked. Residues 100-120 (QLYFFSSLVCTECVLLASMAY) traverse the membrane as a helical segment. Residues 121-139 (DRYVAICHPLRYHVLVTPG) lie on the Cytoplasmic side of the membrane. A helical transmembrane segment spans residues 140 to 160 (LCLQLVGFSFVSGFTISMIKV). Topologically, residues 161–196 (CFISSVTFCGSNVLNHFFCDISPILKLACTDFSTAE) are extracellular. A helical membrane pass occupies residues 197–217 (LVDFILAFIILVFPLLATILS). At 218-237 (YWHITLAVLRIPSATGCWRA) the chain is on the cytoplasmic side. A helical transmembrane segment spans residues 238 to 258 (FSTCASHLTVVTVFYTALLFM). The Extracellular segment spans residues 259-271 (YVRPQAIDSQSSN). Residues 272-292 (KLISAVYTVVTPIINPLIYCL) form a helical membrane-spanning segment. The Cytoplasmic portion of the chain corresponds to 293–312 (RNKEFKDALKKALGLGQTSH).

Belongs to the G-protein coupled receptor 1 family.

It localises to the cell membrane. Functionally, odorant receptor. This chain is Olfactory receptor 6B2 (OR6B2), found in Homo sapiens (Human).